The chain runs to 145 residues: MKILSRDKVALKVATAGTVAVGGLAFSLSFTALSELSAANGVAQSWMVPLVIDGGILVATMATVALSRHGWYAWALLILSSLMSVAGNVAHAQPHGLIAMVIAAIPPLWLLASTHLTVLLYREAQESGSESISEPLLTRGFAEAA.

Its function is as follows. Putative excisionase. This chain is Gene 34.1 protein (34.1), found in Mycobacterium (Mycobacteriophage D29).